Consider the following 186-residue polypeptide: ATP synthase subunit delta (186 aa).

The protein belongs to the ATPase delta chain family. In terms of assembly, F-type ATPases have 2 components, F(1) - the catalytic core - and F(0) - the membrane proton channel. F(1) has five subunits: alpha(3), beta(3), gamma(1), delta(1), epsilon(1). F(0) has three main subunits: a(1), b(2) and c(10-14). The alpha and beta chains form an alternating ring which encloses part of the gamma chain. F(1) is attached to F(0) by a central stalk formed by the gamma and epsilon chains, while a peripheral stalk is formed by the delta and b chains.

It localises to the cell inner membrane. F(1)F(0) ATP synthase produces ATP from ADP in the presence of a proton or sodium gradient. F-type ATPases consist of two structural domains, F(1) containing the extramembraneous catalytic core and F(0) containing the membrane proton channel, linked together by a central stalk and a peripheral stalk. During catalysis, ATP synthesis in the catalytic domain of F(1) is coupled via a rotary mechanism of the central stalk subunits to proton translocation. In terms of biological role, this protein is part of the stalk that links CF(0) to CF(1). It either transmits conformational changes from CF(0) to CF(1) or is implicated in proton conduction. In Fuscovulum blasticum (Rhodobacter blasticus), this protein is ATP synthase subunit delta.